A 240-amino-acid polypeptide reads, in one-letter code: Probable transcriptional regulatory protein Csal_0810 (240 aa).

Belongs to the TACO1 family.

It is found in the cytoplasm. The sequence is that of Probable transcriptional regulatory protein Csal_0810 from Chromohalobacter salexigens (strain ATCC BAA-138 / DSM 3043 / CIP 106854 / NCIMB 13768 / 1H11).